Reading from the N-terminus, the 445-residue chain is Exodeoxyribonuclease 7 large subunit (445 aa).

It belongs to the XseA family. Heterooligomer composed of large and small subunits.

It localises to the cytoplasm. It carries out the reaction Exonucleolytic cleavage in either 5'- to 3'- or 3'- to 5'-direction to yield nucleoside 5'-phosphates.. Bidirectionally degrades single-stranded DNA into large acid-insoluble oligonucleotides, which are then degraded further into small acid-soluble oligonucleotides. The polypeptide is Exodeoxyribonuclease 7 large subunit (Limosilactobacillus reuteri (strain DSM 20016) (Lactobacillus reuteri)).